A 437-amino-acid chain; its full sequence is Eukaryotic peptide chain release factor subunit 1 (437 aa).

At Ala2 the chain carries N-acetylalanine. Residues 61 to 64 (NIKS) carry the NIKS motif; plays an important role in translational termination motif. 4-hydroxylysine is present on Lys63. A Glycyl lysine isopeptide (Lys-Gly) (interchain with G-Cter in SUMO2) cross-link involves residue Lys87. Residue Gln185 is modified to N5-methylglutamine. Lys279 participates in a covalent cross-link: Glycyl lysine isopeptide (Lys-Gly) (interchain with G-Cter in ubiquitin). Thr347 bears the Phosphothreonine mark. A Glycyl lysine isopeptide (Lys-Gly) (interchain with G-Cter in SUMO2) cross-link involves residue Lys404.

Belongs to the eukaryotic release factor 1 family. As to quaternary structure, component of the eRF1-eRF3-GTP ternary complex, composed of ETF1/ERF1 and eRF3 (GSPT1/ERF3A or GSPT2/ERF3B) and GTP. Component of the transient SURF (SMG1-UPF1-eRF1-eRF3) complex. Interacts with JMJD4. The ETF1-GSPT1 complex interacts with JMJD4. Hydroxylation at Lys-63 by JMJD4 promotes its translational termination efficiency. Post-translationally, methylated at Gln-185 by N6AMT1. In terms of processing, ubiquitinated at Lys-279 via 'Lys-6'-linked polyubiquitin chains by RNF14 and RNF25 in response to ribosome collisions (ribosome stalling), leading to its degradation by the proteasome and rescue of stalled ribosomes.

It localises to the cytoplasm. Component of the eRF1-eRF3-GTP ternary complex, a ternary complex that mediates translation termination in response to the termination codons. The eRF1-eRF3-GTP complex binds to a stop codon in the ribosomal A-site. ETF1/ERF1 is responsible for stop codon recognition and inducing hydrolysis of peptidyl-tRNA. Following GTP hydrolysis, eRF3 (GSPT1/ERF3A or GSPT2/ERF3B) dissociates, permitting ETF1/eRF1 to accommodate fully in the A-site, followed by hydrolysis of peptidyl-tRNA. Component of the transient SURF complex which recruits UPF1 to stalled ribosomes in the context of nonsense-mediated decay (NMD) of mRNAs containing premature stop codons. Required for SHFL-mediated translation termination which inhibits programmed ribosomal frameshifting (-1PRF) of mRNA from viruses and cellular genes. The protein is Eukaryotic peptide chain release factor subunit 1 (ETF1) of Bos taurus (Bovine).